The following is a 343-amino-acid chain: UDP-3-O-acylglucosamine N-acyltransferase (343 aa).

H238 functions as the Proton acceptor in the catalytic mechanism.

It belongs to the transferase hexapeptide repeat family. LpxD subfamily. In terms of assembly, homotrimer.

The catalysed reaction is a UDP-3-O-[(3R)-3-hydroxyacyl]-alpha-D-glucosamine + a (3R)-hydroxyacyl-[ACP] = a UDP-2-N,3-O-bis[(3R)-3-hydroxyacyl]-alpha-D-glucosamine + holo-[ACP] + H(+). The protein operates within bacterial outer membrane biogenesis; LPS lipid A biosynthesis. In terms of biological role, catalyzes the N-acylation of UDP-3-O-acylglucosamine using 3-hydroxyacyl-ACP as the acyl donor. Is involved in the biosynthesis of lipid A, a phosphorylated glycolipid that anchors the lipopolysaccharide to the outer membrane of the cell. In Marinomonas sp. (strain MWYL1), this protein is UDP-3-O-acylglucosamine N-acyltransferase.